We begin with the raw amino-acid sequence, 565 residues long: Zinc finger protein 143 (565 aa).

7 consecutive C2H2-type zinc fingers follow at residues Phe230–His254, Tyr260–His284, Tyr290–His314, Phe320–His344, Tyr350–His374, Tyr380–His404, and Tyr410–His433.

This sequence belongs to the GLI C2H2-type zinc-finger protein family.

It localises to the nucleus. Functionally, transcriptional activator. Activates the gene for selenocysteine tRNA (tRNAsec). Binds to the activator element (AE) motif of the selenocysteine tRNA gene promoter. This Xenopus laevis (African clawed frog) protein is Zinc finger protein 143 (znf143).